Consider the following 239-residue polypeptide: Small ribosomal subunit protein uS2 (239 aa).

Belongs to the universal ribosomal protein uS2 family.

This Francisella tularensis subsp. tularensis (strain WY96-3418) protein is Small ribosomal subunit protein uS2.